Consider the following 101-residue polypeptide: Large ribosomal subunit protein bL21 (101 aa).

It belongs to the bacterial ribosomal protein bL21 family. Part of the 50S ribosomal subunit. Contacts protein L20.

In terms of biological role, this protein binds to 23S rRNA in the presence of protein L20. The sequence is that of Large ribosomal subunit protein bL21 from Thermus thermophilus (strain ATCC BAA-163 / DSM 7039 / HB27).